The following is a 1098-amino-acid chain: Unconventional myosin-If (1098 aa).

One can recognise a Myosin motor domain in the interval 17–690 (SGVDDMVLLP…SLFLLEEVRE (674 aa)). 110–117 (GESGAGKT) serves as a coordination point for ATP. Residues 579-589 (PHYIRCIKPNE) form an actin-binding region. In terms of domain architecture, IQ spans 693 to 722 (FDGFARTIQKAWRRHVAVRKYEEMREEASN). Residues 728-917 (KERRRNSINR…GRTLTVSVGD (190 aa)) form the TH1 domain. 2 disordered regions span residues 913–1009 (VSVG…EFLN) and 1021–1044 (KRSVGQRPVPGVGRPKPQPRTHGP). Basic residues predominate over residues 924–937 (KPTRKGMAKGKPRR). Serine 1023 is modified (phosphoserine). One can recognise an SH3 domain in the interval 1041–1098 (THGPRCRALYQYVGQDVDELSFNVNEVIEILMEDPSGWWKGRLHGQEGLFPGNYVEKI).

The protein belongs to the TRAFAC class myosin-kinesin ATPase superfamily. Myosin family.

Its function is as follows. Myosins are actin-based motor molecules with ATPase activity. Unconventional myosins serve in intracellular movements. Their highly divergent tails are presumed to bind to membranous compartments, which would be moved relative to actin filaments. In Homo sapiens (Human), this protein is Unconventional myosin-If (MYO1F).